A 735-amino-acid chain; its full sequence is Protein argonaute (735 aa).

Residues 1–94 (MDLLSNLRRS…LVQMGTKQLD (94 aa)) are N-terminal domain. A linker L1 region spans residues 95 to 180 (CRNDAHRCAL…IDIHHRFYTP (86 aa)). Residues 181-284 (WTVHQWLEQY…SPSLTMEMLA (104 aa)) form a PAZ domain region. A linker L2 region spans residues 285-369 (KVAEDSTVCD…SKTADIRNKG (85 aa)). Positions 370–498 (CAKIGETSFG…LLCKAGWQPI (129 aa)) are mid domain. The interval 499–735 (QLESVDHPEV…NISRDKLIAV (237 aa)) is PIWI domain. Active-site residues include Asp516, Glu550, Asp584, and Asp709. Position 516 (Asp516) interacts with Mn(2+). Mn(2+)-binding residues include Asp584, Asp709, and Val735.

Belongs to the argonaute family. Long pAgo subfamily. Copurifies with SSB proteins Synpcc7942_0079 and Synpcc7942_0301 as well as other proteins. The cofactor is Mn(2+).

A DNA-guided ssDNA endonuclease that might play a role in defense against invading mobile genetic elements. Uses short ssDNA sequences as guides (gDNA) to bind complementary target strands, resulting in cleavage of the target DNA (tDNA). The cleavage site is 10 nucleotides (nt) downstream of the target residue base-paired with the 5'-end of the gDNA. Both 5'-P and 5'-OH gDNAs confer activity; a 5'-OH guide cleaves between nt 10-11 and nt 11-12. Guide DNA mismatches in the seed (nt 2-9) can enhance activity, mismatches 1-5 nt after the cleavage site block activity. Has no appreciable activity with guide RNA or on target RNA. In situ binds to 5'-phosphorylated DNA 14-20 nt in length; small DNA maps over the chromosome and plasmid with some preference for the replication origin and the probable termination site. Also has weak guide-independent nuclease activity on DNA called 'chopping'. Overexpression of wild-type or catalytically inactive mutant has no visible effect during growth under continuous high light for up to a month. The protein is Protein argonaute of Synechococcus elongatus (strain ATCC 33912 / PCC 7942 / FACHB-805) (Anacystis nidulans R2).